We begin with the raw amino-acid sequence, 550 residues long: Crystal protein (550 aa).

The first 19 residues, 1 to 19 (MNKIIILLIILLSFDIISA), serve as a signal peptide directing secretion. Cys-91 and Cys-111 are oxidised to a cystine. Residue Asn-156 is glycosylated (N-linked (GlcNAc...) asparagine). The active-site Acyl-ester intermediate is Ser-215. A disulfide bridge links Cys-267 with Cys-274. Residues Glu-340 and His-443 each act as charge relay system in the active site. N-linked (GlcNAc...) asparagine glycosylation occurs at Asn-506.

The protein belongs to the type-B carboxylesterase/lipase family.

It localises to the cytoplasmic vesicle. It is found in the esterosome membrane. This Dictyostelium discoideum (Social amoeba) protein is Crystal protein (cryS).